The chain runs to 30 residues: Cyclotide mech-1 (30 aa).

A cross-link (cyclopeptide (Gly-Asp)) is located at residues 1–30 (GVIPCGESCVFIPCINKKKCSCKNKVCYRD). 3 cysteine pairs are disulfide-bonded: Cys5–Cys20, Cys9–Cys22, and Cys14–Cys27.

In terms of processing, this is a cyclic peptide. Contains 3 disulfide bonds.

Functionally, probably participates in a plant defense mechanism (Potential). Binds to and induces leakage in phospholipd membranes, particularly ones containing 1-palmitoyl-2-oleophosphatidylethanolamine (POPE). Not active against Gram-negative bacterium E.coli ATCC 25922 or Gram-positive bacterium S.aureus ATCC 25923 up to a concentration of 64 uM. The polypeptide is Cyclotide mech-1 (Melicytus chathamicus (Chatham Island mahoe)).